The following is a 923-amino-acid chain: Tyrosine-protein kinase receptor torso (923 aa).

A signal peptide spans 1-20 (MLIFYAKYAFIFWFFVGSNQ). Over 21 to 399 (GEMLLMDKIS…VLLSEGNMVK (379 aa)) the chain is Extracellular. 12 N-linked (GlcNAc...) asparagine glycosylation sites follow: N37, N63, N107, N142, N146, N287, N298, N314, N326, N342, N348, and N377. Residues 400 to 420 (LVLFIIVPICCILMLCSLTFC) traverse the membrane as a helical segment. At 421 to 923 (RRNRSEVQAL…EEELYLEPLN (503 aa)) the chain is on the cytoplasmic side. The region spanning 475 to 874 (VLLQDVLGEG…TFSALKHRLG (400 aa)) is the Protein kinase domain. Residues 481 to 489 (LGEGAFGLV) and K502 contribute to the ATP site. S608 is modified (phosphoserine). The interval 656 to 687 (YIPKTAEAPKDRPKRKLKPQPKKDSKQDFKSD) is disordered. Residues 676-687 (PKKDSKQDFKSD) are compositionally biased toward basic and acidic residues. The Proton acceptor role is filled by D741.

It belongs to the protein kinase superfamily. Tyr protein kinase family. Requires Mg(2+) as cofactor. In terms of processing, may be auto-phosphorylated on tyrosine residues.

The protein resides in the membrane. The enzyme catalyses L-tyrosyl-[protein] + ATP = O-phospho-L-tyrosyl-[protein] + ADP + H(+). Functionally, probable receptor tyrosine kinase which is required for determination of anterior and posterior terminal structures in the embryo. During postembryonic development, involved in the initiation of metamorphosis probably by inducing the production of ecdysone in response to prothoracicotropic hormone Ptth. Binding to Ptth stimulates activation of canonical MAPK signaling leading to ERK phosphorylation. This Drosophila melanogaster (Fruit fly) protein is Tyrosine-protein kinase receptor torso (tor).